Consider the following 400-residue polypeptide: Sphingosine 1-phosphate receptor 5 (400 aa).

Over 1 to 41 (MEPGLLRPAPVSEVIVLHYNYTGKLRGARYQPGAGLRADAA) the chain is Extracellular. The N-linked (GlcNAc...) asparagine glycan is linked to Asn20. Residues 42–62 (VCLAVCAFIVLENLAVLLVLV) form a helical membrane-spanning segment. At 63-68 (RHPRFH) the chain is on the cytoplasmic side. A helical transmembrane segment spans residues 69–89 (APMFLLLGSLTLSDLLAGAAY). Residues 90–111 (ATNILLSGPLTLRLSPALWFAR) lie on the Extracellular side of the membrane. A helical membrane pass occupies residues 112–132 (EGGVFVALAASVLSLLAIALE). Residues 133–151 (RHLTMARRGPAPAASRART) are Cytoplasmic-facing. The chain crosses the membrane as a helical span at residues 152–172 (LAMAVAAWGASLLLGLLPALG). At 173–192 (WNCLGRLETCSTVLPLYAKA) the chain is on the extracellular side. A helical membrane pass occupies residues 193–213 (YVLFCVLAFLGILAAICALYA). The Cytoplasmic segment spans residues 214–253 (RIYCQVRANARRLRAGPGSRRATSSSRSRHTPRSLALLRT). The chain crosses the membrane as a helical span at residues 254–274 (LSVVLLAFVACWGPLFLLLLL). Residues 275–288 (DVACPARACPVLLQ) lie on the Extracellular side of the membrane. A helical membrane pass occupies residues 289–309 (ADPFLGLAMANSLLNPIIYTF). The Cytoplasmic segment spans residues 310–400 (TNRDLRHALL…NRSLVPTATD (91 aa)). Cys324 carries the S-palmitoyl cysteine lipid modification. The segment at 331–400 (QDSSNSLQRS…NRSLVPTATD (70 aa)) is disordered. Phosphoserine is present on residues Ser340, Ser342, and Ser384. A compositionally biased stretch (polar residues) spans 360–400 (DRSSSPSEHLSPQQDGVDTSCSTGSPGVATANRSLVPTATD).

Belongs to the G-protein coupled receptor 1 family. In terms of tissue distribution, expressed in spleen and brain. In the CNS expression is restricted to oligodendrocytes.

The protein localises to the cell membrane. Receptor for the lysosphingolipid sphingosine 1-phosphate (S1P). S1P is a bioactive lysophospholipid that elicits diverse physiological effect on most types of cells and tissues. Is coupled to both the G(i/0)alpha and G(12) subclass of heteromeric G-proteins. S1P activation on oligodendroglial cells modulates two distinct functional pathways mediating either process retraction or cell survival. S1P activation on O4-positive pre-oligodendrocytes induces process retraction via a Rho kinase/collapsin response-mediated protein signaling pathway. The S1P-induced survival of mature oligodendrocytes is mediated through a pertussis toxin-sensitive, Akt-dependent pathway. S1P activation on oligodendroglial cells modulates two distinct functional pathways mediating either process retraction or cell survival. These effects depend on the developmental stage of the cell. This Mus musculus (Mouse) protein is Sphingosine 1-phosphate receptor 5 (S1pr5).